Consider the following 194-residue polypeptide: uncharacterized protein (194 aa).

It belongs to the calycin superfamily. Fatty-acid binding protein (FABP) family.

This is an uncharacterized protein from Caenorhabditis elegans.